An 875-amino-acid polypeptide reads, in one-letter code: Alanine--tRNA ligase (875 aa).

Zn(2+) contacts are provided by histidine 565, histidine 569, cysteine 666, and histidine 670.

Belongs to the class-II aminoacyl-tRNA synthetase family. Zn(2+) is required as a cofactor.

Its subcellular location is the cytoplasm. The catalysed reaction is tRNA(Ala) + L-alanine + ATP = L-alanyl-tRNA(Ala) + AMP + diphosphate. In terms of biological role, catalyzes the attachment of alanine to tRNA(Ala) in a two-step reaction: alanine is first activated by ATP to form Ala-AMP and then transferred to the acceptor end of tRNA(Ala). Also edits incorrectly charged Ser-tRNA(Ala) and Gly-tRNA(Ala) via its editing domain. The chain is Alanine--tRNA ligase from Leptothrix cholodnii (strain ATCC 51168 / LMG 8142 / SP-6) (Leptothrix discophora (strain SP-6)).